Reading from the N-terminus, the 780-residue chain is APC membrane recruitment protein 3 (780 aa).

The segment covering 20–32 (KLIDSPAKEDPDK) has biased composition (basic and acidic residues). 7 disordered regions span residues 20–59 (KLIDSPAKEDPDKWPLSLGEQQRAYGEKSSQTSPCSQGYG), 341–407 (ELPL…FPRD), 547–569 (KGREDQATTCFPPSRQEPWAHSG), 582–617 (GEPARGSKTPSKDDSLEEGTQDFSEGQSSSEATMTS), 635–659 (KELGTPGNLRYSQGPLRPGHRGSAL), 706–729 (KNPISSKPNEAAGCGLSSSASPQD), and 749–780 (LGPQACSSVDSQPQQLCPRAPEQVPHRGSVGS). Positions 354–376 (SKASSIDTGTPKSEQPESVSTSD) are enriched in polar residues. A compositionally biased stretch (polar residues) spans 602–617 (QDFSEGQSSSEATMTS). Residues 753–763 (ACSSVDSQPQQ) are compositionally biased toward polar residues.

The protein belongs to the Amer family.

The protein localises to the cell membrane. In terms of biological role, regulator of the canonical Wnt signaling pathway. Acts by specifically binding phosphatidylinositol 4,5-bisphosphate (PtdIns(4,5)P2), translocating to the cell membrane. This Mus musculus (Mouse) protein is APC membrane recruitment protein 3 (Amer3).